Consider the following 843-residue polypeptide: Probable inorganic carbon transporter subunit DabA 2 (843 aa).

Zn(2+) is bound by residues cysteine 352, aspartate 354, histidine 536, and cysteine 551.

The protein belongs to the inorganic carbon transporter (TC 9.A.2) DabA family. Forms a complex with DabB. Zn(2+) serves as cofactor.

It is found in the cell inner membrane. Part of an energy-coupled inorganic carbon pump. This chain is Probable inorganic carbon transporter subunit DabA 2, found in Bradyrhizobium sp. (strain BTAi1 / ATCC BAA-1182).